The primary structure comprises 302 residues: Glutaminase (302 aa).

Substrate-binding residues include S61, N111, E155, N162, Y186, Y238, and V256.

It belongs to the glutaminase family. As to quaternary structure, homotetramer.

The catalysed reaction is L-glutamine + H2O = L-glutamate + NH4(+). The chain is Glutaminase from Pseudomonas fluorescens (strain ATCC BAA-477 / NRRL B-23932 / Pf-5).